The following is a 123-amino-acid chain: Integration host factor subunit alpha (123 aa).

The disordered stretch occupies residues Asn97–Thr123. Positions Ala98–Ala111 are enriched in low complexity. Basic and acidic residues predominate over residues Asp113–Thr123.

This sequence belongs to the bacterial histone-like protein family. Heterodimer of an alpha and a beta chain.

Functionally, this protein is one of the two subunits of integration host factor, a specific DNA-binding protein that functions in genetic recombination as well as in transcriptional and translational control. This chain is Integration host factor subunit alpha, found in Rhodopseudomonas palustris (strain BisB5).